Here is a 409-residue protein sequence, read N- to C-terminus: Argininosuccinate synthase (409 aa).

Residues 15 to 23 and Ala42 each bind ATP; that span reads AYSGGLDTS. L-citrulline contacts are provided by Tyr93 and Ser98. Gly123 contacts ATP. L-aspartate contacts are provided by Thr125, Asn129, and Asp130. An L-citrulline-binding site is contributed by Asn129. L-citrulline is bound by residues Arg133, Ser182, Ser191, Glu267, and Tyr279.

It belongs to the argininosuccinate synthase family. Type 1 subfamily. In terms of assembly, homotetramer.

Its subcellular location is the cytoplasm. The catalysed reaction is L-citrulline + L-aspartate + ATP = 2-(N(omega)-L-arginino)succinate + AMP + diphosphate + H(+). Its pathway is amino-acid biosynthesis; L-arginine biosynthesis; L-arginine from L-ornithine and carbamoyl phosphate: step 2/3. This chain is Argininosuccinate synthase, found in Desulfitobacterium hafniense (strain Y51).